Here is a 191-residue protein sequence, read N- to C-terminus: Small ribosomal subunit protein bS6 (191 aa).

The disordered stretch occupies residues 168 to 191 (KVNLTRKPTPNKSSENKQKVEKQA). A compositionally biased stretch (basic and acidic residues) spans 181–191 (SENKQKVEKQA).

Belongs to the bacterial ribosomal protein bS6 family.

In terms of biological role, binds together with bS18 to 16S ribosomal RNA. In Mycoplasmoides gallisepticum (strain R(low / passage 15 / clone 2)) (Mycoplasma gallisepticum), this protein is Small ribosomal subunit protein bS6.